The sequence spans 276 residues: MLSIRTVLGPLAAILLTVIGPFGAHGSGLADKVMWAVNAGGESHVDVHGIHYRKDPLEGRVGRASDYGMKLPILRSNPEDQVLYQTERYNEDSFGYDIPIKEEGEYVIVLKFAEVYFAQSQQKVFDIRVNGHTVVKDLDIFDRVGHSTAHDEIIPISIKKGKLSVQGEVSTFTGKLSVEFVKGYYDNPKVCALYIMKGTADDVPQLQPHPGLEKKEEEEEEEEEEGSPSKKQSNKNRVQSGPRTPNPYASDNSSLMFPILVAFGVFIPTLFCLCRL.

The first 26 residues, 1 to 26 (MLSIRTVLGPLAAILLTVIGPFGAHG), serve as a signal peptide directing secretion. Residues 27–253 (SGLADKVMWA…TPNPYASDNS (227 aa)) are Lumenal-facing. Residues tyrosine 67, tyrosine 89, tyrosine 116, phenylalanine 117, and aspartate 186 each coordinate a carbohydrate. Residues 202-249 (DVPQLQPHPGLEKKEEEEEEEEEEGSPSKKQSNKNRVQSGPRTPNPYA) form a disordered region. The span at 216 to 226 (EEEEEEEEEEG) shows a compositional bias: acidic residues. A compositionally biased stretch (polar residues) spans 229–249 (SKKQSNKNRVQSGPRTPNPYA). An N-linked (GlcNAc...) asparagine glycan is attached at asparagine 252. Residues 254–274 (SLMFPILVAFGVFIPTLFCLC) traverse the membrane as a helical segment. Over 275 to 276 (RL) the chain is Cytoplasmic.

Belongs to the malectin family.

It localises to the endoplasmic reticulum membrane. Carbohydrate-binding protein with a strong ligand preference for Glc2-N-glycan. May play a role in the early steps of protein N-glycosylation. Can bind di- or higher oligomers but not monomers of glucose, including maltose, maltotriose, maltotetraose, maltoheptaose, nigerose, kojibose, cellobiose and isomaltose, although based on their subcellular locations, these are unlikely to all be physiological ligands. The polypeptide is Malectin-B (Xenopus laevis (African clawed frog)).